A 367-amino-acid chain; its full sequence is Homoserine O-acetyltransferase (367 aa).

In terms of domain architecture, AB hydrolase-1 spans 44–350 (NAILVTHAWT…AYGHDAFLLE (307 aa)). The active-site Nucleophile is S150. R217 provides a ligand contact to substrate. Active-site residues include D311 and H344. Substrate is bound at residue D345.

It belongs to the AB hydrolase superfamily. MetX family. Homodimer.

It is found in the cytoplasm. It carries out the reaction L-homoserine + acetyl-CoA = O-acetyl-L-homoserine + CoA. The protein operates within amino-acid biosynthesis; L-methionine biosynthesis via de novo pathway; O-acetyl-L-homoserine from L-homoserine: step 1/1. In terms of biological role, transfers an acetyl group from acetyl-CoA to L-homoserine, forming acetyl-L-homoserine. This chain is Homoserine O-acetyltransferase, found in Citrifermentans bemidjiense (strain ATCC BAA-1014 / DSM 16622 / JCM 12645 / Bem) (Geobacter bemidjiensis).